The following is a 586-amino-acid chain: DNA-binding protein RFX8 (586 aa).

Residues 22-97 (VIQWLVDNFC…YHYDGICIKK (76 aa)) constitute a DNA-binding region (RFX-type winged-helix).

The protein belongs to the RFX family.

It localises to the nucleus. Its function is as follows. May be a transcription factor. This chain is DNA-binding protein RFX8 (RFX8), found in Homo sapiens (Human).